The chain runs to 517 residues: Ribonuclease Y (517 aa).

A helical transmembrane segment spans residues 4-24 (LIYIVILFVGIAAGAFFGISV). In terms of domain architecture, KH spans 207–267 (TISTVALPND…LRREVARRTI (61 aa)). The HD domain maps to 333-426 (VLAHSVEVAQ…VAAADAISAA (94 aa)).

Belongs to the RNase Y family.

It localises to the cell membrane. Its function is as follows. Endoribonuclease that initiates mRNA decay. The polypeptide is Ribonuclease Y (Fervidobacterium nodosum (strain ATCC 35602 / DSM 5306 / Rt17-B1)).